Here is a 341-residue protein sequence, read N- to C-terminus: Protein P3 (341 aa).

Residues 46 to 175 (RARQAANPVS…QTKNAPDANE (130 aa)) form a disordered region. A compositionally biased stretch (basic residues) spans 97 to 116 (KSKRAVRREKRRTAAKKATN). Positions 142–152 (SYLSSLLSSPS) are enriched in low complexity.

Belongs to the nepovirus protein P3 family.

This is Protein P3 from Vitis rupestris (Grape).